We begin with the raw amino-acid sequence, 401 residues long: MVNGSTQYLAHVGELSLKKGNRRQFEVQLERNLTLMLRSINPHVTVRAGRLYLSVPASFEAQTTAEQALSYLLGITGWAAATACPKTMEAITRCAHAEATLAAREGKRTFRIEARRADKRFCRTSSEIAREVGAVIHQSGALSVDLHHPDVVIFIEVREREAFLYGARRRGLRGLPCGVSGRGLLLLSGGIDSPVAGYRMLSRGMHIDCLYFHSYPYTPPEAQKKVEDLAKVLARYGLSTTLTVVSLTDIQKQLQTHAPAPSLTLLLRMCMMRIAEHVAREQRARCLITGESLAQVASQTLENLTVTSACTHLPIFRPLIGADKEDIIRTATEIGTYAISIRPYEDCCTLFAPKHPVLRPEVEEMQKQYQSLMLGPLLEDAFRTRKRTRIYGNYGVQESGE.

The region spanning 63 to 168 (TTAEQALSYL…EREAFLYGAR (106 aa)) is the THUMP domain. ATP contacts are provided by residues 186–187 (LL), 211–212 (YF), R268, G290, and Q299.

This sequence belongs to the ThiI family.

The protein localises to the cytoplasm. The enzyme catalyses [ThiI sulfur-carrier protein]-S-sulfanyl-L-cysteine + a uridine in tRNA + 2 reduced [2Fe-2S]-[ferredoxin] + ATP + H(+) = [ThiI sulfur-carrier protein]-L-cysteine + a 4-thiouridine in tRNA + 2 oxidized [2Fe-2S]-[ferredoxin] + AMP + diphosphate. The catalysed reaction is [ThiS sulfur-carrier protein]-C-terminal Gly-Gly-AMP + S-sulfanyl-L-cysteinyl-[cysteine desulfurase] + AH2 = [ThiS sulfur-carrier protein]-C-terminal-Gly-aminoethanethioate + L-cysteinyl-[cysteine desulfurase] + A + AMP + 2 H(+). Its pathway is cofactor biosynthesis; thiamine diphosphate biosynthesis. In terms of biological role, catalyzes the ATP-dependent transfer of a sulfur to tRNA to produce 4-thiouridine in position 8 of tRNAs, which functions as a near-UV photosensor. Also catalyzes the transfer of sulfur to the sulfur carrier protein ThiS, forming ThiS-thiocarboxylate. This is a step in the synthesis of thiazole, in the thiamine biosynthesis pathway. The sulfur is donated as persulfide by IscS. This is Probable tRNA sulfurtransferase from Treponema pallidum (strain Nichols).